We begin with the raw amino-acid sequence, 266 residues long: Undecaprenyl-diphosphatase (266 aa).

The next 8 membrane-spanning stretches (helical) occupy residues Met1–Ile21, Gln39–Phe59, Trp87–Ile107, Leu111–Ala131, Ala149–Ala169, Ala183–Val203, Ala218–Leu238, and Met246–Leu266.

Belongs to the UppP family.

The protein localises to the cell inner membrane. The catalysed reaction is di-trans,octa-cis-undecaprenyl diphosphate + H2O = di-trans,octa-cis-undecaprenyl phosphate + phosphate + H(+). Functionally, catalyzes the dephosphorylation of undecaprenyl diphosphate (UPP). Confers resistance to bacitracin. This is Undecaprenyl-diphosphatase from Shewanella sp. (strain MR-4).